The sequence spans 41 residues: Ornatin-A2 (41 aa).

Residues 33–35 (RGD) carry the Cell attachment site motif.

This sequence belongs to the ornatin family.

It localises to the secreted. Potent inhibitor of fibrinogen interaction with platelet receptors expressed on glycoprotein IIb-IIIa complex. May prevent blood from clotting during either feeding and/or storage of ingested blood. This is Ornatin-A2 from Placobdella ornata (Turtle leech).